Consider the following 219-residue polypeptide: C-type lectin domain family 4 member E (219 aa).

The Cytoplasmic portion of the chain corresponds to 1 to 19 (MNSSKSSETQCTERGCFSS). Residues 20 to 40 (QMFLWTVAGIPILFLSACFIT) traverse the membrane as a helical; Signal-anchor for type II membrane protein segment. Residues 41–219 (RCVVTFRIFQ…INPLNKGKSL (179 aa)) are Extracellular-facing. Asn62 is a glycosylation site (N-linked (GlcNAc...) asparagine). A disulfide bridge links Cys80 with Cys91. Residues 87–206 (FQSSCYFFST…CFLNYFRICE (120 aa)) form the C-type lectin domain. A glycan (N-linked (GlcNAc...) asparagine) is linked at Asn107. Disulfide bonds link Cys108-Cys205 and Cys179-Cys197. The Ca(2+) site is built by Val117, Asn119, Glu123, Glu169, Asn171, Asn193, Asp194, and Glu206. Residues 169-171 (EPN) carry the Confers specificity for glucose/mannose-type carbohydrates motif.

In terms of assembly, monomer and homodimer. Interacts with signaling adapter Fc receptor gamma chain/FCER1G to form a functional complex; the interaction is direct. Alternatively, acts as a bridge for interaction between CLEC4D and FCER1G. A heterodimer of CLEC4E and CLEC4D associates with FCER1G to form a functional complex. Interacts with SAP130 nuclear protein that is released from necrotic cells; the interaction is direct. Expressed in monocytes and macrophages.

The protein localises to the cell membrane. It localises to the cell projection. Its subcellular location is the phagocytic cup. Its function is as follows. Calcium-dependent lectin that acts as a pattern recognition receptor (PRR) of the innate immune system: recognizes damage-associated molecular patterns (DAMPs) of abnormal self and pathogen-associated molecular patterns (PAMPs) of bacteria and fungi. The PAMPs notably include mycobacterial trehalose 6,6'-dimycolate (TDM), a cell wall glycolipid with potent adjuvant immunomodulatory functions. Interacts with signaling adapter Fc receptor gamma chain/FCER1G to form a functional complex in myeloid cells. Binding of mycobacterial trehalose 6,6'-dimycolate (TDM) to this receptor complex leads to phosphorylation of the immunoreceptor tyrosine-based activation motif (ITAM) of FCER1G, triggering activation of SYK, CARD9 and NF-kappa-B, consequently driving maturation of antigen-presenting cells and shaping antigen-specific priming of T-cells toward effector T-helper 1 and T-helper 17 cell subtypes. Also recognizes alpha-mannose residues on pathogenic fungi of the genus Malassezia and mediates macrophage activation. Through recognition of DAMPs released upon nonhomeostatic cell death, enables immune sensing of damaged self and promotes inflammatory cell infiltration into the damaged tissue. This chain is C-type lectin domain family 4 member E, found in Homo sapiens (Human).